The primary structure comprises 113 residues: UPF0482 protein KPN78578_15540 (113 aa).

Residues 1-28 (MNMTLNKRWCLTAILALSAVVYTSSSYA) form the signal peptide. The disordered stretch occupies residues 38-60 (GDSAQSRQQASMEKEQWNDTRSL). The span at 39 to 48 (DSAQSRQQAS) shows a compositional bias: polar residues. Residues 49–59 (MEKEQWNDTRS) show a composition bias toward basic and acidic residues.

The protein belongs to the UPF0482 family.

This is UPF0482 protein KPN78578_15540 from Klebsiella pneumoniae subsp. pneumoniae (strain ATCC 700721 / MGH 78578).